Here is a 338-residue protein sequence, read N- to C-terminus: Methionine import ATP-binding protein MetN 2 (338 aa).

Residues 2-242 (IEIEKVCVDF…PQHAFTQQLV (241 aa)) enclose the ABC transporter domain. 39–46 (GTSGAGKS) serves as a coordination point for ATP.

This sequence belongs to the ABC transporter superfamily. Methionine importer (TC 3.A.1.24) family. In terms of assembly, the complex is composed of two ATP-binding proteins (MetN), two transmembrane proteins (MetI) and a solute-binding protein (MetQ).

Its subcellular location is the cell inner membrane. It catalyses the reaction L-methionine(out) + ATP + H2O = L-methionine(in) + ADP + phosphate + H(+). It carries out the reaction D-methionine(out) + ATP + H2O = D-methionine(in) + ADP + phosphate + H(+). In terms of biological role, part of the ABC transporter complex MetNIQ involved in methionine import. Responsible for energy coupling to the transport system. The chain is Methionine import ATP-binding protein MetN 2 from Salmonella paratyphi A (strain ATCC 9150 / SARB42).